Consider the following 208-residue polypeptide: Putative vomeronasal receptor-like protein 4 (208 aa).

Over 1–19 (MEMTKLFSYIVIKNVYYPQ) the chain is Extracellular. A helical transmembrane segment spans residues 20 to 40 (VSFGISANTFLLLFHIFTFAY). At 41–48 (THRLKPID) the chain is on the cytoplasmic side. A helical transmembrane segment spans residues 49-69 (MTISHLPLIHILLLFTQAILV). At 70-97 (SSDLFESWNIQNNDLKCKIITFLNRVMR) the chain is on the extracellular side. A disulfide bridge connects residues Cys86 and Cys173. Residues 98 to 118 (GVSICTTCLLSVLQAITISPS) form a helical membrane-spanning segment. The Cytoplasmic segment spans residues 119-135 (TSFLEKFKHISANHTLG). A helical transmembrane segment spans residues 136–156 (FILFSWVLNMFITNNLLLFIV). Residues 157 to 183 (PTPNRIGASLLFVTEHCYVLPMSYTHR) lie on the Extracellular side of the membrane. A helical membrane pass occupies residues 184–204 (SLFFILMVLRDVIFIGLMVLS). Topologically, residues 205–208 (SGYG) are cytoplasmic.

Belongs to the G-protein coupled receptor 1 family. Expressed in olfactory nerve.

The protein resides in the cell membrane. In terms of biological role, putative pheromone receptor. In Homo sapiens (Human), this protein is Putative vomeronasal receptor-like protein 4 (VN1R17P).